We begin with the raw amino-acid sequence, 108 residues long: Iron-sulfur cluster assembly protein CyaY (108 aa).

Belongs to the frataxin family.

In terms of biological role, involved in iron-sulfur (Fe-S) cluster assembly. May act as a regulator of Fe-S biogenesis. The protein is Iron-sulfur cluster assembly protein CyaY of Burkholderia cenocepacia (strain ATCC BAA-245 / DSM 16553 / LMG 16656 / NCTC 13227 / J2315 / CF5610) (Burkholderia cepacia (strain J2315)).